The following is a 374-amino-acid chain: Chaperone protein DnaJ (374 aa).

The J domain occupies 5 to 70 (DYYEVLGVER…SKRAAFDQYG (66 aa)). The CR-type zinc finger occupies 133-211 (GTTVSIRVPT…CHGEGRVEEY (79 aa)). Residues Cys-146, Cys-149, Cys-163, Cys-166, Cys-185, Cys-188, Cys-199, and Cys-202 each contribute to the Zn(2+) site. CXXCXGXG motif repeat units follow at residues 146-153 (CQPCDGSG), 163-170 (CPTCGGIG), 185-192 (CPRCHGQG), and 199-206 (CTSCHGEG).

Belongs to the DnaJ family. In terms of assembly, homodimer. The cofactor is Zn(2+).

The protein localises to the cytoplasm. Its function is as follows. Participates actively in the response to hyperosmotic and heat shock by preventing the aggregation of stress-denatured proteins and by disaggregating proteins, also in an autonomous, DnaK-independent fashion. Unfolded proteins bind initially to DnaJ; upon interaction with the DnaJ-bound protein, DnaK hydrolyzes its bound ATP, resulting in the formation of a stable complex. GrpE releases ADP from DnaK; ATP binding to DnaK triggers the release of the substrate protein, thus completing the reaction cycle. Several rounds of ATP-dependent interactions between DnaJ, DnaK and GrpE are required for fully efficient folding. Also involved, together with DnaK and GrpE, in the DNA replication of plasmids through activation of initiation proteins. This chain is Chaperone protein DnaJ, found in Pseudomonas putida (strain ATCC 700007 / DSM 6899 / JCM 31910 / BCRC 17059 / LMG 24140 / F1).